The sequence spans 138 residues: Mediator of RNA polymerase II transcription subunit 19 (138 aa).

It belongs to the Mediator complex subunit 19 family. In terms of assembly, component of the Mediator complex.

The protein resides in the nucleus. In terms of biological role, component of the Mediator complex, a coactivator involved in the regulated transcription of nearly all RNA polymerase II-dependent genes. Mediator functions as a bridge to convey information from gene-specific regulatory proteins to the basal RNA polymerase II transcription machinery. Mediator is recruited to promoters by direct interactions with regulatory proteins and serves as a scaffold for the assembly of a functional preinitiation complex with RNA polymerase II and the general transcription factors. The chain is Mediator of RNA polymerase II transcription subunit 19 (med19) from Schizosaccharomyces pombe (strain 972 / ATCC 24843) (Fission yeast).